The sequence spans 218 residues: Molybdenum cofactor guanylyltransferase (218 aa).

Residues 16–18 (LAG), lysine 28, asparagine 56, aspartate 74, and aspartate 109 each bind GTP. A Mg(2+)-binding site is contributed by aspartate 109.

Belongs to the MobA family. As to quaternary structure, monomer. The cofactor is Mg(2+).

Its subcellular location is the cytoplasm. It carries out the reaction Mo-molybdopterin + GTP + H(+) = Mo-molybdopterin guanine dinucleotide + diphosphate. Functionally, transfers a GMP moiety from GTP to Mo-molybdopterin (Mo-MPT) cofactor (Moco or molybdenum cofactor) to form Mo-molybdopterin guanine dinucleotide (Mo-MGD) cofactor. The protein is Molybdenum cofactor guanylyltransferase of Sinorhizobium fredii (strain NBRC 101917 / NGR234).